The sequence spans 702 residues: Kinesin-like protein KIF3A (702 aa).

The Kinesin motor domain maps to 14 to 345; the sequence is NVKVVVRCRP…LRYANRAKNI (332 aa). Position 100–107 (100–107) interacts with ATP; sequence GQTGTGKT. Residues 355-593 are a coiled coil; the sequence is PKDALLRQFQ…LSRELRLQML (239 aa). Disordered stretches follow at residues 372-424 and 667-702; these read KKLE…KMIE and LMKL…SLLQ. The span at 376–400 shows a compositional bias: acidic residues; sequence EGEEISGSDISGSEEDDDEEGEIGE. The span at 410–424 shows a compositional bias: basic and acidic residues; sequence DQAGKKKVSPDKMIE. The interval 600 to 702 is globular; sequence PRDYQEMIEN…PETVIDSLLQ (103 aa). Residues 675–690 are compositionally biased toward basic residues; it reads TSKGKARPKTGRRKRS. Residue Ser-690 is modified to Phosphoserine.

It belongs to the TRAFAC class myosin-kinesin ATPase superfamily. Kinesin family. Kinesin II subfamily. As to quaternary structure, heterodimer of KIF3A and KIF3B. Interacts with CIMAP3. Interacts with CLN3. Interacts with DCTN1. Interacts with FLCN. Interacts with AP3B1.

The protein localises to the cytoplasm. It localises to the cytoskeleton. It is found in the cell projection. Its subcellular location is the cilium. The protein resides in the microtubule organizing center. The protein localises to the centrosome. It localises to the centriole. Functionally, microtubule-based anterograde translocator for membranous organelles. Plus end-directed microtubule sliding activity in vitro. Plays a role in primary cilia formation. Plays a role in centriole cohesion and subdistal appendage organization and function. Regulates the formation of the subdistal appendage via recruitment of DCTN1 to the centriole. Also required for ciliary basal feet formation and microtubule anchoring to mother centriole. The polypeptide is Kinesin-like protein KIF3A (KIF3A) (Pongo abelii (Sumatran orangutan)).